We begin with the raw amino-acid sequence, 154 residues long: PTS system fructose-specific EIIA component (154 aa).

The PTS EIIA type-2 domain maps to 8-152 (TITPLELISL…QTVQDVLAEV (145 aa)). Residue His70 is the Tele-phosphohistidine intermediate of the active site. Position 70 is a phosphohistidine; by HPr (His70).

It is found in the cytoplasm. Its function is as follows. The phosphoenolpyruvate-dependent sugar phosphotransferase system (sugar PTS), a major carbohydrate active transport system, catalyzes the phosphorylation of incoming sugar substrates concomitantly with their translocation across the cell membrane. The enzyme II PtfABC PTS system is involved in fructose transport. This Haloferax volcanii (strain ATCC 29605 / DSM 3757 / JCM 8879 / NBRC 14742 / NCIMB 2012 / VKM B-1768 / DS2) (Halobacterium volcanii) protein is PTS system fructose-specific EIIA component.